The chain runs to 155 residues: Endoribonuclease YbeY (155 aa).

Zn(2+)-binding residues include H114, H118, and H124.

It belongs to the endoribonuclease YbeY family. Zn(2+) is required as a cofactor.

Its subcellular location is the cytoplasm. Single strand-specific metallo-endoribonuclease involved in late-stage 70S ribosome quality control and in maturation of the 3' terminus of the 16S rRNA. The polypeptide is Endoribonuclease YbeY (Salmonella arizonae (strain ATCC BAA-731 / CDC346-86 / RSK2980)).